Here is a 547-residue protein sequence, read N- to C-terminus: Putative cysteine ligase BshC (547 aa).

The stretch at 461 to 504 (ASTEATRSAIMDEMEALKQKVVRAEKRQQDEVRAQLKKAHTNLR) forms a coiled coil.

It belongs to the BshC family.

The protein is Putative cysteine ligase BshC of Salinibacter ruber (strain DSM 13855 / M31).